Reading from the N-terminus, the 175-residue chain is Transcription factor HES-3 (175 aa).

A bHLH domain is found at 1–49 (MEKKRRARINLSLEQLRSLLERHYSHQIRKRKLEKADILELSVKYVRSL). The 34-residue stretch at 65–98 (YPSGFRGGLPGSSQRLRPGEDDSGLRCPLLLQRR) folds into the Orange domain. The span at 124–145 (PGPPAGGSQSPQSPFPPLGGLL) shows a compositional bias: low complexity. Positions 124–175 (PGPPAGGSQSPQSPFPPLGGLLESSTGILAPPPASNCQAENPRPGFRVWRPW) are disordered. The short motif at 172–175 (WRPW) is the WRPW motif element.

As to quaternary structure, transcription repression requires formation of a complex with a corepressor protein of the Groucho/TLE family. Expressed exclusively in Purkinje cells.

Its subcellular location is the nucleus. Functionally, transcriptional repressor of genes that require a bHLH protein for their transcription. In Rattus norvegicus (Rat), this protein is Transcription factor HES-3 (Hes3).